A 456-amino-acid polypeptide reads, in one-letter code: Bifunctional protein GlmU (456 aa).

A pyrophosphorylase region spans residues M1–R229. UDP-N-acetyl-alpha-D-glucosamine contacts are provided by residues L11–G14, K25, Q76, G81–T82, Y103–D105, G140, E154, N169, and N227. D105 contacts Mg(2+). N227 serves as a coordination point for Mg(2+). A linker region spans residues L230–S250. The segment at G251–K456 is N-acetyltransferase. The UDP-N-acetyl-alpha-D-glucosamine site is built by R333 and K351. H363 acts as the Proton acceptor in catalysis. Residues Y366 and N377 each coordinate UDP-N-acetyl-alpha-D-glucosamine. Residues A380, N386–Y387, S405, A423, and R440 contribute to the acetyl-CoA site.

This sequence in the N-terminal section; belongs to the N-acetylglucosamine-1-phosphate uridyltransferase family. The protein in the C-terminal section; belongs to the transferase hexapeptide repeat family. In terms of assembly, homotrimer. Mg(2+) is required as a cofactor.

It is found in the cytoplasm. It catalyses the reaction alpha-D-glucosamine 1-phosphate + acetyl-CoA = N-acetyl-alpha-D-glucosamine 1-phosphate + CoA + H(+). The catalysed reaction is N-acetyl-alpha-D-glucosamine 1-phosphate + UTP + H(+) = UDP-N-acetyl-alpha-D-glucosamine + diphosphate. It functions in the pathway nucleotide-sugar biosynthesis; UDP-N-acetyl-alpha-D-glucosamine biosynthesis; N-acetyl-alpha-D-glucosamine 1-phosphate from alpha-D-glucosamine 6-phosphate (route II): step 2/2. The protein operates within nucleotide-sugar biosynthesis; UDP-N-acetyl-alpha-D-glucosamine biosynthesis; UDP-N-acetyl-alpha-D-glucosamine from N-acetyl-alpha-D-glucosamine 1-phosphate: step 1/1. It participates in bacterial outer membrane biogenesis; LPS lipid A biosynthesis. Functionally, catalyzes the last two sequential reactions in the de novo biosynthetic pathway for UDP-N-acetylglucosamine (UDP-GlcNAc). The C-terminal domain catalyzes the transfer of acetyl group from acetyl coenzyme A to glucosamine-1-phosphate (GlcN-1-P) to produce N-acetylglucosamine-1-phosphate (GlcNAc-1-P), which is converted into UDP-GlcNAc by the transfer of uridine 5-monophosphate (from uridine 5-triphosphate), a reaction catalyzed by the N-terminal domain. This is Bifunctional protein GlmU from Salmonella choleraesuis (strain SC-B67).